The following is a 458-amino-acid chain: Protein adenylyltransferase FICD (458 aa).

The Cytoplasmic portion of the chain corresponds to 1-23; it reads MILMPMASVVAVAEPKWVSVWGR. Residues 24 to 44 traverse the membrane as a helical; Signal-anchor for type II membrane protein segment; it reads FLWMALLSMALGSLLALLLPL. Residues 45–458 are Lumenal-facing; it reads GVVEEHCLAV…GFKETLPVRP (414 aa). O-AMP-threonine; by autocatalysis is present on T80. TPR repeat units follow at residues 106–139 and 140–173; these read AKAALNQALEMKRQGKRGKAHKLFLHALKMDPGF and VDALNEFGIFSEEDKDIIQADYLYTRALTISPFH. O-AMP-threonine; by autocatalysis is present on T183. The short motif at 230–235 is the Inhibitory (S/T)XXXE(G/N) motif element; sequence TVAIEG. An ATP-binding site is contributed by E234. An N-linked (GlcNAc...) asparagine glycan is attached at N275. One can recognise a Fido domain in the interval 285 to 420; that stretch reads VTMDDMLEIH…VRPFIRFIAK (136 aa). ATP is bound at residue 316–319; sequence VGHH. H363 is a catalytic residue. ATP is bound by residues 367 to 374, 399 to 400, and N407; these read DGNGRTSR and YY.

This sequence belongs to the fic family. In terms of assembly, homodimer. Interacts with HD. It depends on Mg(2+) as a cofactor. Requires Mn(2+) as cofactor. Post-translationally, auto-AMPylated in vitro.

The protein resides in the endoplasmic reticulum membrane. It catalyses the reaction L-tyrosyl-[protein] + ATP = O-(5'-adenylyl)-L-tyrosyl-[protein] + diphosphate. It carries out the reaction 3-O-(5'-adenylyl)-L-threonyl-[protein] + H2O = L-threonyl-[protein] + AMP + H(+). The enzyme catalyses L-threonyl-[protein] + ATP = 3-O-(5'-adenylyl)-L-threonyl-[protein] + diphosphate. Its activity is regulated as follows. The side chain of Glu-234 determines which of the two opposing activities (AMPylase or de-AMPylase) will take place. In response to endoplasmic reticulum stress, mediates de-AMPylase activity. Adenylyltransferase activity is inhibited by the inhibitory helix present at the N-terminus: Glu-234 binds ATP and competes with ATP-binding at Arg-374, thereby preventing adenylyltransferase activity. In unstressed cells, disengagement of Glu-234 promotes adenylyltransferase activity. Activation dissociates ATP-binding from Glu-234, allowing ordered binding of the entire ATP moiety with the alpha-phosphate in an orientation that is productive for accepting an incoming target hydroxyl side chain. Functionally, protein that can both mediate the addition of adenosine 5'-monophosphate (AMP) to specific residues of target proteins (AMPylation), and the removal of the same modification from target proteins (de-AMPylation), depending on the context. The side chain of Glu-231 determines which of the two opposing activities (AMPylase or de-AMPylase) will take place. Acts as a key regulator of the ERN1/IRE1-mediated unfolded protein response (UPR) by mediating AMPylation or de-AMPylation of HSPA5/BiP. In unstressed cells, acts as an adenylyltransferase by mediating AMPylation of HSPA5/BiP at 'Thr-518', thereby inactivating it. In response to endoplasmic reticulum stress, acts as a phosphodiesterase by mediating removal of ATP (de-AMPylation) from HSPA5/BiP at 'Thr-518', leading to restore HSPA5/BiP activity. Although it is able to AMPylate RhoA, Rac and Cdc42 Rho GTPases in vitro, Rho GTPases do not constitute physiological substrates. This chain is Protein adenylyltransferase FICD, found in Mus musculus (Mouse).